The following is a 563-amino-acid chain: Arginine--tRNA ligase (563 aa).

Residues 122-132 (PNIAKPMSMGH) carry the 'HIGH' region motif.

Belongs to the class-I aminoacyl-tRNA synthetase family. As to quaternary structure, monomer.

Its subcellular location is the cytoplasm. It carries out the reaction tRNA(Arg) + L-arginine + ATP = L-arginyl-tRNA(Arg) + AMP + diphosphate. This chain is Arginine--tRNA ligase, found in Ligilactobacillus salivarius (strain UCC118) (Lactobacillus salivarius).